We begin with the raw amino-acid sequence, 308 residues long: NAD kinase (308 aa).

The active-site Proton acceptor is the aspartate 86. NAD(+)-binding positions include 86 to 87 (DG), arginine 91, 160 to 161 (NE), aspartate 190, and 201 to 206 (TAYAFS).

This sequence belongs to the NAD kinase family. Requires a divalent metal cation as cofactor.

The protein localises to the cytoplasm. The enzyme catalyses NAD(+) + ATP = ADP + NADP(+) + H(+). Its function is as follows. Involved in the regulation of the intracellular balance of NAD and NADP, and is a key enzyme in the biosynthesis of NADP. Catalyzes specifically the phosphorylation on 2'-hydroxyl of the adenosine moiety of NAD to yield NADP. The chain is NAD kinase from Mycolicibacterium paratuberculosis (strain ATCC BAA-968 / K-10) (Mycobacterium paratuberculosis).